The chain runs to 592 residues: Craniofacial development protein 2 (592 aa).

A compositionally biased stretch (basic and acidic residues) spans 1–16 (MEEFDSKDISTSKDED). Disordered regions lie at residues 1–225 (MEEF…KGQS) and 499–592 (VTNE…DCNN). A compositionally biased stretch (acidic residues) spans 25 to 42 (HEDDINELVKEDEVDGEE). Composition is skewed to basic and acidic residues over residues 78 to 108 (SRES…RQEE) and 147 to 162 (KVEE…EVKL). Positions 175–184 (LTQQGRLSGR) are enriched in polar residues. Basic and acidic residues-rich tracts occupy residues 185-207 (TSED…RRAD), 508-523 (EEAK…EKPE), 552-562 (SVFKQDEKDKP), and 580-592 (EKCD…DCNN). A hydrophilic region spans residues 499–578 (VTNEEDATNE…SVPSLPAGSG (80 aa)).

In terms of processing, phosphorylated by CK2 (casein kinase II) in vitro. As to expression, expressed in liver and lung with higher expression in brain.

Its subcellular location is the cytoplasm. The protein localises to the nucleus. The chain is Craniofacial development protein 2 (CFDP2) from Bos taurus (Bovine).